Consider the following 475-residue polypeptide: MNTALAQQIANEGGVEAWMIAQQHKSLLRFLTCGSVDDGKSTLIGRLLHDTRQIYEDQLSSLHNDSKRHGTQGEKLDLALLVDGLQAEREQGITIDVAYRYFSTEKRKFIIADTPGHEQYTRNMATGASTCELAILLIDARKGVLDQTRRHSFISTLLGIKHLVVAINKMDLVDYSEETFTRIREDYLTFAGQLPGNLDIRFVPLSALEGDNVASQSESMSWYSGPTLLEVLETVEIQRVVDAQPMRFPVQYVNRPNLDFRGYAGTLASGRVEVGQRVKVLPSGVESNVARIVTFDGDREEAFAGEAITLVLTDEIDISRGDLLLAADEALPAVQSASVDVVWMAEQPLSPGQSYDIKIAGKKTRARVDGIRYQVDINNLTQREVENLPLNGIGLVDLTFDEPLVLDRYQQNPVTGGLIFIDRLSNVTVGAGMVHEPKNEAAVASSEFSAFELELNALVRRHFPHWGARDLLGDK.

A tr-type G domain is found at 25-239 (KSLLRFLTCG…EVLETVEIQR (215 aa)). The segment at 34-41 (GSVDDGKS) is G1. 34–41 (GSVDDGKS) lines the GTP pocket. The G2 stretch occupies residues 92-96 (GITID). Residues 113–116 (DTPG) are G3. GTP-binding positions include 113–117 (DTPGH) and 168–171 (NKMD). A G4 region spans residues 168–171 (NKMD). The segment at 206-208 (SAL) is G5.

The protein belongs to the TRAFAC class translation factor GTPase superfamily. Classic translation factor GTPase family. CysN/NodQ subfamily. As to quaternary structure, heterodimer composed of CysD, the smaller subunit, and CysN.

It carries out the reaction sulfate + ATP + H(+) = adenosine 5'-phosphosulfate + diphosphate. It participates in sulfur metabolism; hydrogen sulfide biosynthesis; sulfite from sulfate: step 1/3. Functionally, with CysD forms the ATP sulfurylase (ATPS) that catalyzes the adenylation of sulfate producing adenosine 5'-phosphosulfate (APS) and diphosphate, the first enzymatic step in sulfur assimilation pathway. APS synthesis involves the formation of a high-energy phosphoric-sulfuric acid anhydride bond driven by GTP hydrolysis by CysN coupled to ATP hydrolysis by CysD. The polypeptide is Sulfate adenylyltransferase subunit 1 (Shigella boydii serotype 18 (strain CDC 3083-94 / BS512)).